A 274-amino-acid polypeptide reads, in one-letter code: DNA damage-inducible protein D (274 aa).

This Escherichia coli (strain K12) protein is DNA damage-inducible protein D (dinD).